We begin with the raw amino-acid sequence, 325 residues long: Casein kinase I isoform alpha (325 aa).

At alanine 2 the chain carries N-acetylalanine. At serine 4 the chain carries Phosphoserine. The residue at position 8 (lysine 8) is an N6-acetyllysine. The Protein kinase domain maps to tyrosine 17–phenylalanine 285. ATP contacts are provided by residues isoleucine 23 to isoleucine 31 and lysine 46. Residue aspartate 136 is the Proton acceptor of the active site. Isoleucine 156 is subject to Phosphoserine.

It belongs to the protein kinase superfamily. CK1 Ser/Thr protein kinase family. Casein kinase I subfamily. As to quaternary structure, interacts with the Axin complex. Interacts with TUT1, leading to TUT1 phosphorylation. Interacts with FAM83A, FAM83B, FAM83C, FAM83D, FAM83E, FAM83F, FAM83G and FAM83H (via DUF1669). Interaction with FAM83H recruits CSNK1A1 to keratin filaments. Phosphorylated by MTOR in response to mitogenic stimulation, leading to its activation.

Its subcellular location is the cytoplasm. It localises to the cytoskeleton. The protein localises to the microtubule organizing center. The protein resides in the centrosome. It is found in the chromosome. Its subcellular location is the centromere. It localises to the kinetochore. The protein localises to the nucleus speckle. The protein resides in the cilium basal body. It is found in the spindle. It carries out the reaction L-seryl-[protein] + ATP = O-phospho-L-seryl-[protein] + ADP + H(+). It catalyses the reaction L-threonyl-[protein] + ATP = O-phospho-L-threonyl-[protein] + ADP + H(+). Functionally, casein kinases are operationally defined by their preferential utilization of acidic proteins such as caseins as substrates. Can phosphorylate a large number of proteins. Participates in Wnt signaling. Phosphorylates CTNNB1 at 'Ser-45'. May phosphorylate PER1 and PER2. May play a role in segregating chromosomes during mitosis. May play a role in keratin cytoskeleton disassembly and thereby, it may regulate epithelial cell migration. Acts as a positive regulator of mTORC1 and mTORC2 signaling in response to nutrients by mediating phosphorylation of DEPTOR inhibitor. Acts as an inhibitor of NLRP3 inflammasome assembly by mediating phosphorylation of NLRP3. This chain is Casein kinase I isoform alpha (Csnk1a1), found in Rattus norvegicus (Rat).